Consider the following 396-residue polypeptide: Peptide chain release factor 1, mitochondrial (396 aa).

Gln268 is modified (N5-methylglutamine). The disordered stretch occupies residues 317–340; that stretch reads LEKEEKERNARKDQVSTTDRSDKI.

Belongs to the prokaryotic/mitochondrial release factor family. In terms of processing, methylation of glutamine in the GGQ triplet is conserved from bacteria to mammals.

It is found in the mitochondrion. Its function is as follows. Mitochondrial peptide chain release factor that directs the termination of translation in response to the peptide chain termination codons UAA and UAG. This Kluyveromyces lactis (strain ATCC 8585 / CBS 2359 / DSM 70799 / NBRC 1267 / NRRL Y-1140 / WM37) (Yeast) protein is Peptide chain release factor 1, mitochondrial (MRF1).